A 394-amino-acid polypeptide reads, in one-letter code: Elongation factor Tu 2 (394 aa).

One can recognise a tr-type G domain in the interval 10–204 (KPHVNVGTIG…YLDSYIPEPE (195 aa)). Residues 19–26 (GHVDHGKT) form a G1 region. Residue 19–26 (GHVDHGKT) participates in GTP binding. A Mg(2+)-binding site is contributed by T26. The interval 60–64 (GITIN) is G2. Residues 81 to 84 (DCPG) are G3. Residues 81 to 85 (DCPGH) and 136 to 139 (NKCD) contribute to the GTP site. Positions 136-139 (NKCD) are G4. The G5 stretch occupies residues 174–176 (SAL).

Belongs to the TRAFAC class translation factor GTPase superfamily. Classic translation factor GTPase family. EF-Tu/EF-1A subfamily. Monomer.

It localises to the cytoplasm. The catalysed reaction is GTP + H2O = GDP + phosphate + H(+). Functionally, GTP hydrolase that promotes the GTP-dependent binding of aminoacyl-tRNA to the A-site of ribosomes during protein biosynthesis. In Yersinia pseudotuberculosis serotype O:1b (strain IP 31758), this protein is Elongation factor Tu 2.